We begin with the raw amino-acid sequence, 1016 residues long: Vacuolar membrane protease (1016 aa).

Residues 1–36 form a disordered region; sequence MAETESGTGNSPSHRLSETSNASGNRSHQQSKQIAS. Topologically, residues 1–57 are cytoplasmic; that stretch reads MAETESGTGNSPSHRLSETSNASGNRSHQQSKQIASYKSSKPNVFIRFIRAIFGYRK. A helical membrane pass occupies residues 58–78; it reads TSVTLFVFITIIATLILVELS. Residues 79–408 lie on the Vacuolar side of the membrane; the sequence is NSLDFSVKLP…FVIPASQLVL (330 aa). 2 N-linked (GlcNAc...) asparagine glycosylation sites follow: asparagine 147 and asparagine 177. Residues histidine 191 and aspartate 203 each contribute to the Zn(2+) site. Glutamate 238 serves as the catalytic Proton acceptor. Residues glutamate 239, glutamate 264, and histidine 337 each contribute to the Zn(2+) site. A helical membrane pass occupies residues 409–429; it reads INVTCLAVIPLISLPLLVIIF. The Cytoplasmic portion of the chain corresponds to 430 to 438; that stretch reads NYKKNWHIG. Residues 439 to 459 form a helical membrane-spanning segment; sequence FINAIKFPVSLVLSICILNII. Residues 460-481 lie on the Vacuolar side of the membrane; the sequence is THNVIASINEFLPNSSYDSIVS. N-linked (GlcNAc...) asparagine glycosylation is present at asparagine 473. The chain crosses the membrane as a helical span at residues 482–502; it reads TLYSLFLLLNYLFLNGINFIF. At 503–511 the chain is on the cytoplasmic side; the sequence is KGYKGLYHD. Residues 512 to 532 traverse the membrane as a helical segment; that stretch reads EKLILIIQTSFIYWVLLIVST. Over 533–547 the chain is Vacuolar; that stretch reads NKLSKNKIGNDHTGE. Residues 548-568 traverse the membrane as a helical segment; it reads FPLIMLFLLQSIGALFGLFSW. Residues 569–646 lie on the Cytoplasmic side of the membrane; sequence SFKKTTPDEL…SFSYDWSIQY (78 aa). The segment at 598-622 is disordered; that stretch reads YGSNEAELESGEPISSNSSVSLNSS. A compositionally biased stretch (low complexity) spans 612-622; it reads SSNSSVSLNSS. The chain crosses the membrane as a helical span at residues 647-667; that stretch reads VVIVPLSSLIVYNTGSLLLSG. Topologically, residues 668-681 are vacuolar; it reads LNKSIQESLNAEKL. Asparagine 669 is a glycosylation site (N-linked (GlcNAc...) asparagine). The helical transmembrane segment at 682 to 702 threads the bilayer; sequence IFDLIQLVAVTLAIPFLPFIF. Over 703 to 706 the chain is Cytoplasmic; the sequence is KINR. A helical membrane pass occupies residues 707–727; the sequence is LLVTALVLVFCSGFISIFLKS. The Vacuolar portion of the chain corresponds to 728–1016; it reads PFDQLNPLKL…LVSVSKYVEI (289 aa). N-linked (GlcNAc...) asparagine glycans are attached at residues asparagine 778, asparagine 821, asparagine 850, asparagine 875, and asparagine 977.

The protein belongs to the peptidase M28 family. It depends on Zn(2+) as a cofactor.

The protein localises to the vacuole membrane. In terms of biological role, may be involved in vacuolar sorting and osmoregulation. This chain is Vacuolar membrane protease, found in Debaryomyces hansenii (strain ATCC 36239 / CBS 767 / BCRC 21394 / JCM 1990 / NBRC 0083 / IGC 2968) (Yeast).